The primary structure comprises 312 residues: Zinc finger protein 414 (312 aa).

A disordered region spans residues 1–110 (MEEKPSGPIP…RRPPPGKQIP (110 aa)). A compositionally biased stretch (low complexity) spans 29 to 48 (SPAVPAAAPSSSMSEEPGPE). The segment covering 84–93 (GLTSIVSGTS) has biased composition (polar residues). 3 consecutive C2H2-type zinc fingers follow at residues 109–133 (IPCSSPGCCLSFPSVRDLAQHLRTH), 145–169 (FRCSALSCTETFPSMQELVAHSKLH), and 176–201 (FKCENCLLRFRTHRSLFKHLHVCAEH). Residues 203–312 (QSPAPPPPPA…GSDAPSGACR (110 aa)) form a disordered region. Positions 213 to 225 (LDREPPAPERPPE) are enriched in basic and acidic residues. 2 stretches are compositionally biased toward low complexity: residues 227-243 (DPASAPGLPFPLLEPFT) and 265-285 (SPPRLRPFLAAAPGPPASSAA).

The protein belongs to the krueppel C2H2-type zinc-finger protein family.

Its subcellular location is the nucleus. Its function is as follows. May be involved in transcriptional regulation. The sequence is that of Zinc finger protein 414 (ZNF414) from Homo sapiens (Human).